Reading from the N-terminus, the 494-residue chain is Probable 26S proteasome non-ATPase regulatory subunit 3 (494 aa).

The PCI domain occupies 247 to 426 (ARFLYYLGRI…NFMRSKESTD (180 aa)). The tract at residues 458-494 (PPKSYGKDLESAEERREREQQDLELAKEMAEDDEDGF) is disordered. Residues 462–486 (YGKDLESAEERREREQQDLELAKEM) show a composition bias toward basic and acidic residues.

Belongs to the proteasome subunit S3 family. As to quaternary structure, the 26S proteasome is composed of a core protease, known as the 20S proteasome, capped at one or both ends by the 19S regulatory complex (RC). The RC is composed of at least 18 different subunits in two subcomplexes, the base and the lid, which form the portions proximal and distal to the 20S proteolytic core, respectively. As to expression, blood (crystal) cells and cuticle.

In terms of biological role, acts as a regulatory subunit of the 26 proteasome which is involved in the ATP-dependent degradation of ubiquitinated proteins. The sequence is that of Probable 26S proteasome non-ATPase regulatory subunit 3 (Rpn3) from Drosophila melanogaster (Fruit fly).